The primary structure comprises 229 residues: Peptidase E (229 aa).

Active-site charge relay system residues include Ser120, Asp135, and His157.

Belongs to the peptidase S51 family.

The protein resides in the cytoplasm. The catalysed reaction is Dipeptidase E catalyzes the hydrolysis of dipeptides Asp-|-Xaa. It does not act on peptides with N-terminal Glu, Asn or Gln, nor does it cleave isoaspartyl peptides.. Its function is as follows. Hydrolyzes dipeptides containing N-terminal aspartate residues. May play a role in allowing the cell to use peptide aspartate to spare carbon otherwise required for the synthesis of the aspartate family of amino acids. The protein is Peptidase E (pepE) of Salmonella typhimurium (strain LT2 / SGSC1412 / ATCC 700720).